A 376-amino-acid chain; its full sequence is Light-dependent chlorophyll f synthase (376 aa).

A disordered region spans residues 1–22 (MKLESDHVIATSDSSDYTSEPT). Over residues 11-22 (TSDSSDYTSEPT) the composition is skewed to polar residues. A run of 5 helical transmembrane segments spans residues 51-68 (YVGW…TAAT), 140-155 (HFLI…EWEL), 164-178 (WISL…ASVS), 219-240 (LHQL…HGSL), and 298-312 (FLAA…SAAL). H140 contributes to the a chlorophyll binding site. H220 contributes to the a chlorophyll binding site.

It belongs to the reaction center PufL/M/PsbA/D family. In terms of assembly, homodimer.

The protein localises to the cellular thylakoid membrane. Synthesizes chlorophyll f or chlorophyllide f (Chl f, 2-formyl chlorophyll a), probably by oxidation of chlorophyll a or chlorophyllide a and reduction of plastoquinone. The reaction is probably light-dependent. Chl f absorbs far red light (FRL, 707 nm in 100% methanol), and is synthesized when cells are grown in FRL, where it provides the advantage of extending the spectral range of harvested light in terrestrial cyanobacteria. When ectopically expressed in Synechococcus PCC 7002 (which does not grow in FRL and does not make Chl f) produces Chl f (0.059% of total chlorophyll). This chain is Light-dependent chlorophyll f synthase, found in Chlorogloeopsis fritschii (strain PCC 9212).